The chain runs to 420 residues: Transcription factor bHLH89 (420 aa).

Residues glutamate 196 to lysine 216 form a disordered region. Residues arginine 207–lysine 216 are compositionally biased toward basic residues. The bHLH domain occupies serine 212–leucine 261.

Homodimer. As to expression, flowers.

It localises to the nucleus. This Arabidopsis thaliana (Mouse-ear cress) protein is Transcription factor bHLH89 (BHLH89).